We begin with the raw amino-acid sequence, 419 residues long: MQPSKVNKHRIIFHIDMNCFYASVEMAHNPSLKGKPLAIAGNPEERKGIIVTSSYEARGKGVKTTMPIWQAKKLCPDLILMRPNFDRYRAASREIFKMLAEITPYVQPVSIDEGYMDITDTIYAKDPLVTANQLQQRILSGLDIPCSIGIAPNKFLAKMASDMKKPLGITVLRKREVEKLLWPMSVEEMYGIGEKTAQKLNSIEIKTIGDLAKKNVYELKQLLGVNGERLQNRANGIDNRLVDPEAVHDFKSIGSSQTLPHDSTDVTELMQLIHELVDNVERRVKRKEAAGKTVQITIRYHDRKTITRSKKLYNYIDNHREILFVAKELFEQHWNEAPVRLLGVSLQDMETKRNIGEQLDLFTYEAIEKKEKLKVTVDKLTKKYGSNIITSQKNKNESQENQQPRTSFQKDFLDDYKKP.

Residues 12 to 193 (IFHIDMNCFY…MSVEEMYGIG (182 aa)) enclose the UmuC domain. Positions 16 and 112 each coordinate Mg(2+). E113 is an active-site residue. Residues 388-419 (IITSQKNKNESQENQQPRTSFQKDFLDDYKKP) are disordered.

It belongs to the DNA polymerase type-Y family. In terms of assembly, monomer. It depends on Mg(2+) as a cofactor.

It is found in the cytoplasm. The catalysed reaction is DNA(n) + a 2'-deoxyribonucleoside 5'-triphosphate = DNA(n+1) + diphosphate. Functionally, poorly processive, error-prone DNA polymerase involved in untargeted mutagenesis. Copies undamaged DNA at stalled replication forks, which arise in vivo from mismatched or misaligned primer ends. These misaligned primers can be extended by PolIV. Exhibits no 3'-5' exonuclease (proofreading) activity. May be involved in translesional synthesis, in conjunction with the beta clamp from PolIII. This is DNA polymerase IV from Oceanobacillus iheyensis (strain DSM 14371 / CIP 107618 / JCM 11309 / KCTC 3954 / HTE831).